Reading from the N-terminus, the 292-residue chain is 33 kDa chaperonin (292 aa).

2 cysteine pairs are disulfide-bonded: Cys-230–Cys-232 and Cys-263–Cys-266.

The protein belongs to the HSP33 family. Under oxidizing conditions two disulfide bonds are formed involving the reactive cysteines. Under reducing conditions zinc is bound to the reactive cysteines and the protein is inactive.

It is found in the cytoplasm. Redox regulated molecular chaperone. Protects both thermally unfolding and oxidatively damaged proteins from irreversible aggregation. Plays an important role in the bacterial defense system toward oxidative stress. This is 33 kDa chaperonin from Shigella boydii serotype 4 (strain Sb227).